A 221-amino-acid polypeptide reads, in one-letter code: MGIQEKTLGIRKERKLVVVPRERNHVRHASQRTRSKNYKNISKKRAQQHAFGFNIAKTLAKIQAFVWGSPADEEEESVVPLSKNSQDCVPLQWQAKFAQLRQQLHSTQKELQFVKEKCHLLQSVLDDANIDQRYLESRRDMKNIERDNLKPTENLPPSPVRAVNPLVTSSPIHMSPLQSRQRPVSSLQPPKGPNFYAKYPKLPQTNILRESPTEDSVPHAE.

The interval lysine 142–glutamate 221 is disordered. Phosphoserine occurs at positions 158, 170, and 175. The CDC5-binding motif lies at proline 165 to serine 170. The segment covering leucine 166 to glutamine 188 has biased composition (polar residues). A CLB3-docking motif is present at residues proline 189–phenylalanine 195. The CDC14-binding signature appears at proline 200–leucine 202.

In terms of assembly, interacts with CDC5 and CDC14. Post-translationally, phosphorylated by CLB3-CDK1 in metaphase which is required for correct localization at the nuclear envelop and the spindle pole body, and dephosphorylated by CDC14 in early anaphase.

It is found in the nucleus membrane. Its subcellular location is the cytoplasm. It localises to the cytoskeleton. The protein resides in the microtubule organizing center. The protein localises to the spindle pole body. Its function is as follows. Specialized component of the nuclear membrane that may be involved in the connection of the spindle pole body (SPB) to the nuclear envelope. Recruits CDC5 to spindle pole bodies in metaphase. The protein is CDC5 pindle pole body anchor protein 1 of Saccharomyces cerevisiae (strain ATCC 204508 / S288c) (Baker's yeast).